Here is a 602-residue protein sequence, read N- to C-terminus: Aspartate--tRNA(Asp/Asn) ligase (602 aa).

E175 serves as a coordination point for L-aspartate. An aspartate region spans residues 199–202 (QIFK). An L-aspartate-binding site is contributed by R221. ATP-binding positions include 221 to 223 (RDE) and Q230. An L-aspartate-binding site is contributed by H458. E492 contacts ATP. R499 serves as a coordination point for L-aspartate. Residue 544-547 (GLDR) participates in ATP binding.

Belongs to the class-II aminoacyl-tRNA synthetase family. Type 1 subfamily. Homodimer.

The protein localises to the cytoplasm. It catalyses the reaction tRNA(Asx) + L-aspartate + ATP = L-aspartyl-tRNA(Asx) + AMP + diphosphate. In terms of biological role, aspartyl-tRNA synthetase with relaxed tRNA specificity since it is able to aspartylate not only its cognate tRNA(Asp) but also tRNA(Asn). Reaction proceeds in two steps: L-aspartate is first activated by ATP to form Asp-AMP and then transferred to the acceptor end of tRNA(Asp/Asn). This chain is Aspartate--tRNA(Asp/Asn) ligase, found in Cupriavidus taiwanensis (strain DSM 17343 / BCRC 17206 / CCUG 44338 / CIP 107171 / LMG 19424 / R1) (Ralstonia taiwanensis (strain LMG 19424)).